The following is a 679-amino-acid chain: Cysteine-rich receptor-like protein kinase 29 (679 aa).

An N-terminal signal peptide occupies residues 1–23 (MEHVRVIFFFACFLTLAPFHAFA). The Extracellular segment spans residues 24–286 (QVDSYEFDPD…RTGKGKGGSK (263 aa)). Gnk2-homologous domains lie at 30–134 (FDPD…NRTI) and 140–249 (TNPT…TWRF). 6 N-linked (GlcNAc...) asparagine glycosylation sites follow: N41, N45, N71, N107, N131, and N187. Positions 260–281 (PPAIQPADSPQSAARTERTGKG) are disordered. Residues 287–307 (VIIAIVIPILLVALLAICLCL) traverse the membrane as a helical segment. Residues 308 to 679 (VLKWRKNKSG…DVTVSEFSPR (372 aa)) are Cytoplasmic-facing. Positions 357 to 637 (FSSENELGRG…SLMLNSYSFT (281 aa)) constitute a Protein kinase domain. Residues 363-371 (LGRGGFGSV) and K385 each bind ATP. Y430 carries the phosphotyrosine modification. Catalysis depends on D482, which acts as the Proton acceptor. S486 bears the Phosphoserine mark. Residue T524 is modified to Phosphothreonine. At Y532 the chain carries Phosphotyrosine. The segment at 659-679 (SSTEGLQMSSNDVTVSEFSPR) is disordered.

This sequence belongs to the protein kinase superfamily. Ser/Thr protein kinase family. CRK subfamily.

It localises to the membrane. It carries out the reaction L-seryl-[protein] + ATP = O-phospho-L-seryl-[protein] + ADP + H(+). It catalyses the reaction L-threonyl-[protein] + ATP = O-phospho-L-threonyl-[protein] + ADP + H(+). The sequence is that of Cysteine-rich receptor-like protein kinase 29 (CRK29) from Arabidopsis thaliana (Mouse-ear cress).